The primary structure comprises 468 residues: Zinc finger protein 672 (468 aa).

4 C2H2-type zinc fingers span residues 15-37 (YSCSVCGKSFQYSAVLLRHERAH), 43-65 (FCCLECGERCARAADLRAHRWTH), 71-93 (YICSECGQSFSHSGLLDLHLGTH), and 100-123 (RPCRLCGRRFPHVPALLLHRARQH). Residues 129 to 151 (HRCPLCARSFRQSALPFHLARAH) form a C2H2-type 5; degenerate zinc finger. C2H2-type zinc fingers lie at residues 167–189 (YHCTQCPRAFHSSAGLRNHSRIH), 202–224 (HLCGICGKSFSKSSTLTRHLQRH), 230–252 (FKCPECGKGFLESATLVRHQRTH), 258–280 (YACSDCGRCFSESSTLLRHQRSH), 286–308 (HVCATCGKGFGQRYDLVVHQRSH), 314–336 (FPCPQCGRGFTDRSDLTKHLRTH), 342–364 (YHCELCGKRFTCISNLNVHLRNH), 370–392 (HKCPECGKSFSVASKLALHRKTH), and 398–420 (AECTECGKFFSHGRSLSQHQRSH).

This sequence belongs to the krueppel C2H2-type zinc-finger protein family.

Its subcellular location is the nucleus. May be involved in transcriptional regulation. The protein is Zinc finger protein 672 (Znf672) of Mus musculus (Mouse).